The following is a 369-amino-acid chain: Endo-1,4-beta-xylanase A (369 aa).

Positions 1-20 (MRKLTQFCLGLMLLPIAAVA) are cleaved as a signal peptide. A GH10 domain is found at 21–367 (QNQPTMKDVL…KPVVKEIIKL (347 aa)). The Proton donor role is filled by Glu-156. Glu-261 functions as the Nucleophile in the catalytic mechanism.

The protein belongs to the glycosyl hydrolase 10 (cellulase F) family.

The catalysed reaction is Endohydrolysis of (1-&gt;4)-beta-D-xylosidic linkages in xylans.. It functions in the pathway glycan degradation; xylan degradation. This Xylanibacter ruminicola (Prevotella ruminicola) protein is Endo-1,4-beta-xylanase A (xynA).